The sequence spans 222 residues: Glutathione transferase GST 23 (222 aa).

A GST N-terminal domain is found at Lys4–Tyr83. Residues Ser14, Lys41, Val55, and Glu67 to Ser68 each bind glutathione. In terms of domain architecture, GST C-terminal spans Asp89–Leu220.

It belongs to the GST superfamily.

The enzyme catalyses RX + glutathione = an S-substituted glutathione + a halide anion + H(+). In terms of biological role, involved in multiple disease resistance (MDR). The polypeptide is Glutathione transferase GST 23 (Zea mays (Maize)).